The following is a 451-amino-acid chain: Bifunctional protein GlmU (451 aa).

Residues 1 to 225 (MVVVAILAAG…YQEILGINDR (225 aa)) are pyrophosphorylase. UDP-N-acetyl-alpha-D-glucosamine contacts are provided by residues 7–10 (LAAG), Lys21, Gln72, and 77–78 (GT). Residue Asp102 coordinates Mg(2+). Residues Gly139, Glu154, Asn169, and Asn223 each coordinate UDP-N-acetyl-alpha-D-glucosamine. Position 223 (Asn223) interacts with Mg(2+). A linker region spans residues 226–246 (LQLATAYEILQRRVKEQWMMA). The N-acetyltransferase stretch occupies residues 247–451 (GVTLIDPNSI…LGWRRKSGES (205 aa)). Residues Arg328 and Lys346 each coordinate UDP-N-acetyl-alpha-D-glucosamine. His358 functions as the Proton acceptor in the catalytic mechanism. UDP-N-acetyl-alpha-D-glucosamine-binding residues include Tyr361 and Asn372. Residues Ala375, 381–382 (NY), Ser400, Ala418, and Arg435 each bind acetyl-CoA.

It in the N-terminal section; belongs to the N-acetylglucosamine-1-phosphate uridyltransferase family. In the C-terminal section; belongs to the transferase hexapeptide repeat family. Homotrimer. Mg(2+) is required as a cofactor.

Its subcellular location is the cytoplasm. The catalysed reaction is alpha-D-glucosamine 1-phosphate + acetyl-CoA = N-acetyl-alpha-D-glucosamine 1-phosphate + CoA + H(+). It carries out the reaction N-acetyl-alpha-D-glucosamine 1-phosphate + UTP + H(+) = UDP-N-acetyl-alpha-D-glucosamine + diphosphate. It functions in the pathway nucleotide-sugar biosynthesis; UDP-N-acetyl-alpha-D-glucosamine biosynthesis; N-acetyl-alpha-D-glucosamine 1-phosphate from alpha-D-glucosamine 6-phosphate (route II): step 2/2. It participates in nucleotide-sugar biosynthesis; UDP-N-acetyl-alpha-D-glucosamine biosynthesis; UDP-N-acetyl-alpha-D-glucosamine from N-acetyl-alpha-D-glucosamine 1-phosphate: step 1/1. Its pathway is bacterial outer membrane biogenesis; LPS lipid A biosynthesis. In terms of biological role, catalyzes the last two sequential reactions in the de novo biosynthetic pathway for UDP-N-acetylglucosamine (UDP-GlcNAc). The C-terminal domain catalyzes the transfer of acetyl group from acetyl coenzyme A to glucosamine-1-phosphate (GlcN-1-P) to produce N-acetylglucosamine-1-phosphate (GlcNAc-1-P), which is converted into UDP-GlcNAc by the transfer of uridine 5-monophosphate (from uridine 5-triphosphate), a reaction catalyzed by the N-terminal domain. The polypeptide is Bifunctional protein GlmU (Nostoc sp. (strain PCC 7120 / SAG 25.82 / UTEX 2576)).